Here is a 411-residue protein sequence, read N- to C-terminus: MADFFNLKARQQAAAQASSSKTPTSKQESNRLQPWVEKYRPKTLSEVTAQDNTIQILSRTLQSSNLPHMLFYGPPGTGKTSTILALAKQLYGPELMKSRVLELNASDERGISIVRQKVKDFARQQLSVAPTYNVMTEDKDGGEAKMVRYRDKYSCPPFKIIVLDEADSMTQDAQSALRRTMETYSRMTRFCLVCNYVTRIIDPLASRCSKFRFKSLDQGNAVRRVDDIAKLEDVKLDAGVSEELVRVADGDLRKAITFLQSAARLVGATQTAGRKKKVVVDDEDEMDIDPPSAPSKTTISLEQIAEIAGVIPAPTLASFSDALFPKSAAKSIRYNEIAKVVENMIAEGWSASQTVSQLYEQVMFDERVEDIKKVRLAGVFSETDKRLVDGGDEHLAVLDLGVRVAGVLCMG.

Residues 1 to 36 (MADFFNLKARQQAAAQASSSKTPTSKQESNRLQPWV) are disordered. Over residues 11 to 27 (QQAAAQASSSKTPTSKQ) the composition is skewed to low complexity. ATP is bound by residues Val-36, Arg-40, 73–81 (GPPGTGKTS), Asn-195, and Arg-253.

This sequence belongs to the activator 1 small subunits family. As to quaternary structure, heteropentamer of subunits RFC1, RFC2, RFC3, RFC4 and RFC5 that forms a complex with PCNA in the presence of ATP.

The protein localises to the nucleus. Functionally, the elongation of primed DNA templates by DNA polymerase delta and epsilon requires the action of the accessory proteins proliferating cell nuclear antigen (PCNA) and activator 1. Subunit 2 binds ATP and single-stranded DNA. This chain is Replication factor C subunit 2 (RFC2), found in Phaeosphaeria nodorum (strain SN15 / ATCC MYA-4574 / FGSC 10173) (Glume blotch fungus).